Here is a 220-residue protein sequence, read N- to C-terminus: Iron-sulfur cluster repair protein YtfE (220 aa).

The protein belongs to the RIC family. YtfE subfamily. As to quaternary structure, homodimer.

The protein localises to the cytoplasm. Functionally, di-iron-containing protein involved in the repair of iron-sulfur clusters damaged by oxidative and nitrosative stress conditions. This is Iron-sulfur cluster repair protein YtfE from Escherichia coli O157:H7.